A 337-amino-acid polypeptide reads, in one-letter code: Anthranilate phosphoribosyltransferase (337 aa).

5-phospho-alpha-D-ribose 1-diphosphate contacts are provided by residues Gly81, 84 to 85 (GD), Thr89, 91 to 94 (NIST), 109 to 117 (KHGNRALSS), and Thr121. Gly81 provides a ligand contact to anthranilate. Ser93 contacts Mg(2+). An anthranilate-binding site is contributed by Asn112. Arg167 provides a ligand contact to anthranilate. Asp225 and Glu226 together coordinate Mg(2+).

The protein belongs to the anthranilate phosphoribosyltransferase family. In terms of assembly, homodimer. Mg(2+) is required as a cofactor.

It catalyses the reaction N-(5-phospho-beta-D-ribosyl)anthranilate + diphosphate = 5-phospho-alpha-D-ribose 1-diphosphate + anthranilate. It functions in the pathway amino-acid biosynthesis; L-tryptophan biosynthesis; L-tryptophan from chorismate: step 2/5. Catalyzes the transfer of the phosphoribosyl group of 5-phosphorylribose-1-pyrophosphate (PRPP) to anthranilate to yield N-(5'-phosphoribosyl)-anthranilate (PRA). The chain is Anthranilate phosphoribosyltransferase from Sinorhizobium medicae (strain WSM419) (Ensifer medicae).